The following is a 125-amino-acid chain: uncharacterized protein (125 aa).

This is an uncharacterized protein from Homo sapiens (Human).